Reading from the N-terminus, the 562-residue chain is Protein wntless (562 aa).

At 1–13 (MSGTILENLSGRK) the chain is on the cytoplasmic side. The helical transmembrane segment at 14–34 (LSILVGSLLLCQVLCFLLGGL) threads the bilayer. At 35-239 (YAPVPAGHTN…AIHQNGGFTH (205 aa)) the chain is on the lumenal side. A glycan (N-linked (GlcNAc...) asparagine) is linked at asparagine 58. A helical transmembrane segment spans residues 240–260 (VWLMLKTLLFPFVVGIMVWFW). Residues 261–270 (RRVHLLQRSP) lie on the Cytoplasmic side of the membrane. The chain crosses the membrane as a helical span at residues 271-291 (ALLEYMLLYLGGALTFLNLPL). At 292–311 (EYLSLTIEMPYMLLLSDIRQ) the chain is on the lumenal side. Residues 312 to 332 (GIFYAMLLSFWLVFAGEHMLI) traverse the membrane as a helical segment. Residues 333–344 (QDSSNKSTIRSR) lie on the Cytoplasmic side of the membrane. Residues 345 to 365 (YWKHLSAVVVGCISLFVFDIS) form a helical membrane-spanning segment. At 366–386 (ERGVQLRNPFYSIWTTPLGAK) the chain is on the lumenal side. The chain crosses the membrane as a helical span at residues 387-407 (VAMSFILLAGVSAAVYFLFLC). At 408–441 (YMISKVFKNIGDKRTSLPSMSQARRLHYEGLIYR) the chain is on the cytoplasmic side. A helical transmembrane segment spans residues 442-462 (FKFLMLATLLCAALTVTGFIM). Over 463–482 (GQMAEGQWKWNDDVEIQLTS) the chain is Lumenal. The chain crosses the membrane as a helical span at residues 483–503 (AFLTGVYGMWNIYIFALLILY). Over 504–562 (APSHKQWPTMHHSDETTQSNENIVASAASEEIEFSNLPSDSNPSEISSLTSFTRKVAFE) the chain is Cytoplasmic. Residues 538-562 (SNLPSDSNPSEISSLTSFTRKVAFE) are disordered. The span at 539–556 (NLPSDSNPSEISSLTSFT) shows a compositional bias: polar residues.

The protein belongs to the wntless family. Interacts with wg; in the Golgi. Interacts with Vps35, a component of the retromer complex; wls stability is regulated by Vps35.

It localises to the presynaptic cell membrane. The protein localises to the postsynaptic cell membrane. Its subcellular location is the cell membrane. The protein resides in the endoplasmic reticulum membrane. It is found in the endosome membrane. It localises to the golgi apparatus membrane. Its function is as follows. A segment polarity gene required for wingless (wg)-dependent patterning processes, acting in both wg-sending cells and wg-target cells. In non-neuronal cells wls directs wg secretion. The wls traffic loop encompasses the Golgi, the cell surface, an endocytic compartment and a retrograde route leading back to the Golgi, and involves clathrin-mediated endocytosis and the retromer complex (a conserved protein complex consisting of Vps35 and Vps26). In neuronal cells (the larval motorneuron NMJ), the wg signal moves across the synapse via the release of wls-containing exosome-like vesicles. Postsynaptic wls is required for the trafficking of fz2 through the fz2-interacting protein Grip. The sequence is that of Protein wntless from Drosophila pseudoobscura pseudoobscura (Fruit fly).